A 176-amino-acid polypeptide reads, in one-letter code: Adenine phosphoribosyltransferase (176 aa).

The protein belongs to the purine/pyrimidine phosphoribosyltransferase family. As to quaternary structure, homodimer.

It is found in the cytoplasm. The enzyme catalyses AMP + diphosphate = 5-phospho-alpha-D-ribose 1-diphosphate + adenine. The protein operates within purine metabolism; AMP biosynthesis via salvage pathway; AMP from adenine: step 1/1. In terms of biological role, catalyzes a salvage reaction resulting in the formation of AMP, that is energically less costly than de novo synthesis. The chain is Adenine phosphoribosyltransferase from Leuconostoc mesenteroides subsp. mesenteroides (strain ATCC 8293 / DSM 20343 / BCRC 11652 / CCM 1803 / JCM 6124 / NCDO 523 / NBRC 100496 / NCIMB 8023 / NCTC 12954 / NRRL B-1118 / 37Y).